The sequence spans 380 residues: Chaperone protein DnaJ (380 aa).

One can recognise a J domain in the interval 5–70 (DFYEVLGVSR…QKRAAYDQYG (66 aa)). The segment at 135–213 (GCEKDIEIPT…CHGDGRVQKT (79 aa)) adopts a CR-type zinc-finger fold. Positions 148, 151, 165, 168, 187, 190, 201, and 204 each coordinate Zn(2+). CXXCXGXG motif repeat units follow at residues 148–155 (CEPCDGTG), 165–172 (CSTCHGQG), 187–194 (CPTCHGKG), and 201–208 (CNSCHGDG).

Belongs to the DnaJ family. Homodimer. Zn(2+) is required as a cofactor.

The protein resides in the cytoplasm. In terms of biological role, participates actively in the response to hyperosmotic and heat shock by preventing the aggregation of stress-denatured proteins and by disaggregating proteins, also in an autonomous, DnaK-independent fashion. Unfolded proteins bind initially to DnaJ; upon interaction with the DnaJ-bound protein, DnaK hydrolyzes its bound ATP, resulting in the formation of a stable complex. GrpE releases ADP from DnaK; ATP binding to DnaK triggers the release of the substrate protein, thus completing the reaction cycle. Several rounds of ATP-dependent interactions between DnaJ, DnaK and GrpE are required for fully efficient folding. Also involved, together with DnaK and GrpE, in the DNA replication of plasmids through activation of initiation proteins. This chain is Chaperone protein DnaJ, found in Aliivibrio salmonicida (strain LFI1238) (Vibrio salmonicida (strain LFI1238)).